A 243-amino-acid polypeptide reads, in one-letter code: 35 kDa gas vesicle protein (243 aa).

The protein belongs to the gas vesicle GvpC family.

It is found in the gas vesicle shell. Its function is as follows. May confer stability to the gas vesicle shells. Gas vesicles are small, hollow, gas filled protein structures that are found in several microbial planktonic microorganisms. They allow the positioning of the organism at the favorable depth for growth. This is 35 kDa gas vesicle protein from Dactylococcopsis salina (strain PCC 8305) (Myxobactron salinum).